Consider the following 93-residue polypeptide: uncharacterized protein (93 aa).

This is an uncharacterized protein from Enterobacter agglomerans (Erwinia herbicola).